Here is a 156-residue protein sequence, read N- to C-terminus: Transcription elongation factor GreA (156 aa).

The stretch at 1 to 32 (MKKVRLTREGYEKLKKELEDLKRKFMYEISER) forms a coiled coil.

It belongs to the GreA/GreB family.

Functionally, necessary for efficient RNA polymerase transcription elongation past template-encoded arresting sites. The arresting sites in DNA have the property of trapping a certain fraction of elongating RNA polymerases that pass through, resulting in locked ternary complexes. Cleavage of the nascent transcript by cleavage factors such as GreA or GreB allows the resumption of elongation from the new 3'terminus. GreA releases sequences of 2 to 3 nucleotides. This is Transcription elongation factor GreA from Thermotoga maritima (strain ATCC 43589 / DSM 3109 / JCM 10099 / NBRC 100826 / MSB8).